Consider the following 243-residue polypeptide: Aliphatic sulfonates import ATP-binding protein SsuB (243 aa).

The ABC transporter domain maps to 11-230; that stretch reads ATVRGLRKSY…RTHPSFASYT (220 aa). 43-50 provides a ligand contact to ATP; that stretch reads GRSGSGKS.

This sequence belongs to the ABC transporter superfamily. Aliphatic sulfonates importer (TC 3.A.1.17.2) family. As to quaternary structure, the complex is composed of two ATP-binding proteins (SsuB), two transmembrane proteins (SsuC) and a solute-binding protein (SsuA).

The protein localises to the cell membrane. It catalyses the reaction ATP + H2O + aliphatic sulfonate-[sulfonate-binding protein]Side 1 = ADP + phosphate + aliphatic sulfonateSide 2 + [sulfonate-binding protein]Side 1.. Part of the ABC transporter complex SsuABC involved in aliphatic sulfonates import. Responsible for energy coupling to the transport system. Is also involved in taurine transport. Seems to not be involved in long chain aliphatic sulfonates transport (chain length of eight carbon atoms or more). In Corynebacterium glutamicum (strain ATCC 13032 / DSM 20300 / JCM 1318 / BCRC 11384 / CCUG 27702 / LMG 3730 / NBRC 12168 / NCIMB 10025 / NRRL B-2784 / 534), this protein is Aliphatic sulfonates import ATP-binding protein SsuB.